The sequence spans 298 residues: Iron-regulated virulence regulatory protein IrgB (298 aa).

Positions 1-59 (MQDLSAVKAFHALCQHKSLTAAAKALEQPKSTLSRRLAQLEEDLGQSLLMRQGNRLTLT) constitute an HTH lysR-type domain. The H-T-H motif DNA-binding region spans 19-38 (LTAAAKALEQPKSTLSRRLA).

It belongs to the LysR transcriptional regulatory family.

In terms of biological role, transcription activation of the irgA gene. In the presence of sufficient iron, transcription of both irgA and irgB is negatively regulated by a fur-like protein. In low iron conditions, negative regulation of transcription is removed, and production of irgB leads to positive transcriptional activation of irgA. In Vibrio cholerae serotype O1 (strain ATCC 39315 / El Tor Inaba N16961), this protein is Iron-regulated virulence regulatory protein IrgB (irgB).